Reading from the N-terminus, the 266-residue chain is Tryptophan synthase alpha chain (266 aa).

Residues glutamate 52 and aspartate 63 each act as proton acceptor in the active site.

Belongs to the TrpA family. As to quaternary structure, tetramer of two alpha and two beta chains.

It catalyses the reaction (1S,2R)-1-C-(indol-3-yl)glycerol 3-phosphate + L-serine = D-glyceraldehyde 3-phosphate + L-tryptophan + H2O. Its pathway is amino-acid biosynthesis; L-tryptophan biosynthesis; L-tryptophan from chorismate: step 5/5. Functionally, the alpha subunit is responsible for the aldol cleavage of indoleglycerol phosphate to indole and glyceraldehyde 3-phosphate. The chain is Tryptophan synthase alpha chain from Nocardia farcinica (strain IFM 10152).